Here is a 380-residue protein sequence, read N- to C-terminus: S-adenosylmethionine synthase (380 aa).

Histidine 15 serves as a coordination point for ATP. Aspartate 17 is a Mg(2+) binding site. Residue glutamate 43 coordinates K(+). L-methionine-binding residues include glutamate 56 and glutamine 99. Residues glutamine 99–asparagine 109 form a flexible loop region. ATP-binding positions include aspartate 164–lysine 166, arginine 230–phenylalanine 231, aspartate 239, arginine 245–lysine 246, and lysine 266. Residue aspartate 239 participates in L-methionine binding. Lysine 270 provides a ligand contact to L-methionine.

It belongs to the AdoMet synthase family. As to quaternary structure, homotetramer; dimer of dimers. The cofactor is Mg(2+). K(+) is required as a cofactor.

The protein localises to the cytoplasm. It catalyses the reaction L-methionine + ATP + H2O = S-adenosyl-L-methionine + phosphate + diphosphate. Its pathway is amino-acid biosynthesis; S-adenosyl-L-methionine biosynthesis; S-adenosyl-L-methionine from L-methionine: step 1/1. Functionally, catalyzes the formation of S-adenosylmethionine (AdoMet) from methionine and ATP. The overall synthetic reaction is composed of two sequential steps, AdoMet formation and the subsequent tripolyphosphate hydrolysis which occurs prior to release of AdoMet from the enzyme. This Rickettsia prowazekii (strain Madrid E) protein is S-adenosylmethionine synthase.